The chain runs to 248 residues: tRNA (guanine-N(1)-)-methyltransferase (248 aa).

S-adenosyl-L-methionine is bound by residues Gly-113 and 133–138; that span reads VGDYVL.

It belongs to the RNA methyltransferase TrmD family. As to quaternary structure, homodimer.

Its subcellular location is the cytoplasm. The enzyme catalyses guanosine(37) in tRNA + S-adenosyl-L-methionine = N(1)-methylguanosine(37) in tRNA + S-adenosyl-L-homocysteine + H(+). In terms of biological role, specifically methylates guanosine-37 in various tRNAs. The chain is tRNA (guanine-N(1)-)-methyltransferase from Shewanella sp. (strain ANA-3).